We begin with the raw amino-acid sequence, 65 residues long: UPF0434 protein BRADO0313 (65 aa).

This sequence belongs to the UPF0434 family.

The chain is UPF0434 protein BRADO0313 from Bradyrhizobium sp. (strain ORS 278).